The following is a 327-amino-acid chain: Mitochondrial coenzyme A transporter SLC25A42 (327 aa).

3 Solcar repeats span residues Lys-34 to Leu-120, Leu-132 to Leu-217, and Pro-227 to Leu-315. 6 consecutive transmembrane segments (helical) span residues Ile-36–Pro-56, Leu-92–Cys-112, Leu-138–Val-158, Leu-189–Phe-209, Leu-233–Val-253, and Val-296–Leu-316.

This sequence belongs to the mitochondrial carrier (TC 2.A.29) family.

It is found in the mitochondrion inner membrane. The enzyme catalyses ADP(out) + CoA(in) = ADP(in) + CoA(out). It carries out the reaction 3'-dephospho-CoA(in) + ADP(out) = 3'-dephospho-CoA(out) + ADP(in). The catalysed reaction is adenosine 3',5'-bisphosphate(in) + ADP(out) = adenosine 3',5'-bisphosphate(out) + ADP(in). It catalyses the reaction AMP(in) + ADP(out) = AMP(out) + ADP(in). The enzyme catalyses dADP(in) + ADP(out) = dADP(out) + ADP(in). It carries out the reaction ADP(in) + ATP(out) = ADP(out) + ATP(in). Mitochondrial carrier mediating the transport of coenzyme A (CoA) in mitochondria in exchange for intramitochondrial (deoxy)adenine nucleotides and adenosine 3',5'-diphosphate. This chain is Mitochondrial coenzyme A transporter SLC25A42 (slc25a42), found in Xenopus tropicalis (Western clawed frog).